A 397-amino-acid polypeptide reads, in one-letter code: Phosphoglycerate kinase (397 aa).

Residues 21–23, R37, 60–63, R119, and R152 contribute to the substrate site; these read DFN and HLGR. ATP-binding positions include K203, G294, E325, and 354–357; that span reads GGDS.

The protein belongs to the phosphoglycerate kinase family. Monomer.

The protein localises to the cytoplasm. It carries out the reaction (2R)-3-phosphoglycerate + ATP = (2R)-3-phospho-glyceroyl phosphate + ADP. It functions in the pathway carbohydrate degradation; glycolysis; pyruvate from D-glyceraldehyde 3-phosphate: step 2/5. The chain is Phosphoglycerate kinase from Prosthecochloris aestuarii (strain DSM 271 / SK 413).